Consider the following 390-residue polypeptide: Chorismate synthase (390 aa).

NADP(+) contacts are provided by Arg40 and Arg46. FMN is bound by residues 128–130, 251–252, Gly296, 311–315, and Arg339; these read RAS, QA, and KPIPT.

Belongs to the chorismate synthase family. Homotetramer. It depends on FMNH2 as a cofactor.

It catalyses the reaction 5-O-(1-carboxyvinyl)-3-phosphoshikimate = chorismate + phosphate. It participates in metabolic intermediate biosynthesis; chorismate biosynthesis; chorismate from D-erythrose 4-phosphate and phosphoenolpyruvate: step 7/7. Functionally, catalyzes the anti-1,4-elimination of the C-3 phosphate and the C-6 proR hydrogen from 5-enolpyruvylshikimate-3-phosphate (EPSP) to yield chorismate, which is the branch point compound that serves as the starting substrate for the three terminal pathways of aromatic amino acid biosynthesis. This reaction introduces a second double bond into the aromatic ring system. The chain is Chorismate synthase from Sulfurihydrogenibium sp. (strain YO3AOP1).